Reading from the N-terminus, the 329-residue chain is Endochitinase A (329 aa).

Positions 1-23 are cleaved as a signal peptide; sequence MRLCKFTALSSLLFSLLLLSASA. The 42-residue stretch at 24-65 folds into the Chitin-binding type-1 domain; it reads EQCGSQAGGARCPSGLCCSKFGWCGNTNDYCGPGNCQSQCPG. 4 disulfides stabilise this stretch: cysteine 26–cysteine 41, cysteine 35–cysteine 47, cysteine 40–cysteine 54, and cysteine 59–cysteine 63. A 4-hydroxyproline; partial modification is found at proline 67. Proline 69, proline 71, proline 72, and proline 74 each carry 4-hydroxyproline. The residue at position 75 (proline 75) is a 4-hydroxyproline; partial. 3 cysteine pairs are disulfide-bonded: cysteine 101/cysteine 163, cysteine 175/cysteine 183, and cysteine 282/cysteine 314. Glutamate 145 (proton donor) is an active-site residue. Residues 323 to 329 constitute a propeptide, removed in mature form; that stretch reads GLLVDTM.

Belongs to the glycosyl hydrolase 19 family. Chitinase class I subfamily. In terms of processing, the 4-hydroxyproline residues are not glycosylated in this plant vacuolar protein.

The protein localises to the vacuole. It catalyses the reaction Random endo-hydrolysis of N-acetyl-beta-D-glucosaminide (1-&gt;4)-beta-linkages in chitin and chitodextrins.. Its function is as follows. Defense against chitin-containing fungal pathogens. In Nicotiana tabacum (Common tobacco), this protein is Endochitinase A (CHN48).